The following is a 347-amino-acid chain: uncharacterized protein (347 aa).

This is an uncharacterized protein from Mycoplasma genitalium (strain ATCC 33530 / DSM 19775 / NCTC 10195 / G37) (Mycoplasmoides genitalium).